The following is a 146-amino-acid chain: 3-dehydroquinate dehydratase (146 aa).

The active-site Proton acceptor is tyrosine 23. 3 residues coordinate substrate: asparagine 75, histidine 81, and aspartate 88. Histidine 101 acts as the Proton donor in catalysis. Residues 102–103 and arginine 112 each bind substrate; that span reads LS.

Belongs to the type-II 3-dehydroquinase family. In terms of assembly, homododecamer.

The enzyme catalyses 3-dehydroquinate = 3-dehydroshikimate + H2O. The protein operates within metabolic intermediate biosynthesis; chorismate biosynthesis; chorismate from D-erythrose 4-phosphate and phosphoenolpyruvate: step 3/7. Functionally, catalyzes a trans-dehydration via an enolate intermediate. This Marinobacter nauticus (strain ATCC 700491 / DSM 11845 / VT8) (Marinobacter aquaeolei) protein is 3-dehydroquinate dehydratase.